The chain runs to 355 residues: Probable butyrate kinase (355 aa).

This sequence belongs to the acetokinase family.

It is found in the cytoplasm. The enzyme catalyses butanoate + ATP = butanoyl phosphate + ADP. The polypeptide is Probable butyrate kinase (Listeria monocytogenes serovar 1/2a (strain ATCC BAA-679 / EGD-e)).